A 909-amino-acid polypeptide reads, in one-letter code: E3 ubiquitin-protein ligase HACE1 (909 aa).

The N-terminal helix important for homodimerization stretch occupies residues 1-21 (MERAMEQLNRLTRSLRRARTV). 7 ANK repeats span residues 23–55 (LPED…NSKF), 64–93 (VKRS…NPNY), 97–126 (SGCT…DVNI), 130–159 (EGLT…DVDV), 163–192 (MGQT…DINR), 196–226 (SGAT…YLPD), and 228–253 (NGVT…QYHP). The tract at residues 398 to 433 (QDQEAPSLSAFEPPGPGSYESLPPGPGDSKPEVLAG) is disordered. An HECT domain is found at 574 to 909 (NCAKLKQGIA…HCGSYGYTMA (336 aa)). Cysteine 876 acts as the Glycyl thioester intermediate in catalysis.

As to quaternary structure, homodimer. The homodimer is autoinhibited and stabilized by its N-terminal helix. Interacts with RAB1 (RAB1A, RAB1B or RAB1C), RAB4 (RAB4A or RAB4B) and RAB11 (RAB11A or RAB11B); in a GTP-dependent manner. Interacts with the 26S proteasomal complex through the 20S core proteasomal subunit. Interacts with RARB. Autoubiquitinated.

It is found in the golgi apparatus. The protein localises to the golgi stack membrane. Its subcellular location is the cytoplasm. The protein resides in the endoplasmic reticulum. The enzyme catalyses S-ubiquitinyl-[E2 ubiquitin-conjugating enzyme]-L-cysteine + [acceptor protein]-L-lysine = [E2 ubiquitin-conjugating enzyme]-L-cysteine + N(6)-ubiquitinyl-[acceptor protein]-L-lysine.. It participates in protein modification; protein ubiquitination. Sterically autoinhibited in its dimeric state. Functionally, E3 ubiquitin-protein ligase involved in Golgi membrane fusion and regulation of small GTPases. Acts as a regulator of Golgi membrane dynamics during the cell cycle: recruited to Golgi membrane by Rab proteins and regulates postmitotic Golgi membrane fusion. Acts by mediating ubiquitination during mitotic Golgi disassembly, ubiquitination serving as a signal for Golgi reassembly later, after cell division. Specifically binds GTP-bound RAC1, mediating ubiquitination and subsequent degradation of active RAC1, thereby playing a role in host defense against pathogens. May also act as a transcription regulator via its interaction with RARB. In Mus musculus (Mouse), this protein is E3 ubiquitin-protein ligase HACE1 (Hace1).